We begin with the raw amino-acid sequence, 760 residues long: MOXD1 homolog 2 (760 aa).

Residues 1-34 (MAHPRKAVATPATLQLGPPAQTAQSPAATLRHSR) are disordered. The segment covering 18–34 (PPAQTAQSPAATLRHSR) has biased composition (low complexity). Residues 47–67 (CFISCHTFNLFLLLLLLASGV) traverse the membrane as a helical segment. 3 N-linked (GlcNAc...) asparagine glycosylation sites follow: asparagine 78, asparagine 198, and asparagine 223. A DOMON domain is found at 117–233 (DDFRILWQII…DTMRLLYMYH (117 aa)). Disulfide bonds link cysteine 339-cysteine 367, cysteine 467-cysteine 581, and cysteine 543-cysteine 565. Asparagine 668 is a glycosylation site (N-linked (GlcNAc...) asparagine). Residues 678 to 701 (RCKPKRPLAPPTERTAPPPASDLS) are disordered. Residues 740 to 760 (FISCLLWLGASSWWLLLMLRT) form a helical membrane-spanning segment.

The protein belongs to the copper type II ascorbate-dependent monooxygenase family.

It is found in the membrane. The chain is MOXD1 homolog 2 (olf413) from Drosophila melanogaster (Fruit fly).